Consider the following 723-residue polypeptide: LIM domain-binding protein 3 (723 aa).

A PDZ domain is found at 1–84; that stretch reads MSYSVTLTGP…NLSLTLQKSK (84 aa). Phosphoserine occurs at positions 44, 98, and 112. 2 disordered regions span residues 89–134 and 164–193; these read ISTT…GALE and SPVAKASSEGAQGSVSPKVLPGPSQPRQYN. Thr119 carries the post-translational modification Phosphothreonine. Phosphoserine occurs at positions 121 and 123. Residue Ser214 is modified to Phosphoserine. Residue Arg216 is modified to Omega-N-methylarginine. Phosphoserine occurs at positions 220, 251, and 288. 2 disordered regions span residues 280–423 and 436–525; these read GTEY…YSPT and SPAP…PQVT. Ala291 is modified (omega-N-methylarginine). A compositionally biased stretch (low complexity) spans 309–376; it reads ATSPLLPASA…AAAASPAPSA (68 aa). At Ile327 the chain carries Phosphoserine. Position 330 is an omega-N-methylarginine (Ser330). The segment covering 436–466 has biased composition (pro residues); that stretch reads SPAPTYTPSPAPTYSPSPAPAYTPSPAPNYT. Residues 490 to 509 show a composition bias toward polar residues; the sequence is DSFSQKFAPGKSTTTVSKQT. Omega-N-methylarginine is present on residues Arg512 and Arg529. LIM zinc-binding domains lie at 545–603, 604–663, and 664–723; these read PLCG…QFFA, PICA…LFST, and KCHG…AINV.

As to quaternary structure, interacts via its LIM domains with various PKC isoforms. Interacts via its PDZ domain with the ACTN2 C-terminal region. Interacts with MYOZ1, MYOZ2 and MYOZ3. As to expression, expressed primarily in adult heart and skeletal muscle, and detected at lower levels in lung. Isoforms are expressed in a tissue-specific manner. Isoform 1, isoform 3 and isoform 5 are expressed in heart, whereas isoform 2, isoform 4 and isoform 6 are expressed in skeletal muscle.

The protein localises to the cytoplasm. It localises to the perinuclear region. Its subcellular location is the cell projection. The protein resides in the pseudopodium. It is found in the cytoskeleton. The protein localises to the myofibril. It localises to the sarcomere. Its subcellular location is the z line. May function as an adapter in striated muscle to couple protein kinase C-mediated signaling via its LIM domains to the cytoskeleton. The polypeptide is LIM domain-binding protein 3 (Mus musculus (Mouse)).